The chain runs to 395 residues: Elongation factor Tu (395 aa).

One can recognise a tr-type G domain in the interval 10-204 (KTHANIGTIG…AVDEYIPTPE (195 aa)). Residues 19–26 (GHVDHGKT) form a G1 region. Residue 19-26 (GHVDHGKT) coordinates GTP. T26 lines the Mg(2+) pocket. Residues 60 to 64 (GITIN) form a G2 region. The interval 81–84 (DCPG) is G3. GTP contacts are provided by residues 81–85 (DCPGH) and 136–139 (NKVD). Residues 136 to 139 (NKVD) form a G4 region. Positions 174-176 (SAL) are G5.

The protein belongs to the TRAFAC class translation factor GTPase superfamily. Classic translation factor GTPase family. EF-Tu/EF-1A subfamily. As to quaternary structure, monomer.

The protein resides in the cytoplasm. The enzyme catalyses GTP + H2O = GDP + phosphate + H(+). GTP hydrolase that promotes the GTP-dependent binding of aminoacyl-tRNA to the A-site of ribosomes during protein biosynthesis. This is Elongation factor Tu from Macrococcus caseolyticus (strain JCSC5402) (Macrococcoides caseolyticum).